The sequence spans 1188 residues: F-box only protein 38 (1188 aa).

One can recognise an F-box domain in the interval 30–75 (MNQLSHEVLCHIFRYLPLQDIMCMECLSRKLKEAVTLYLRVVRVVD). An interaction with KLF7 region spans residues 59 to 119 (KLKEAVTLYL…LHPRYLERRR (61 aa)). 3 short sequence motifs (nuclear export signal) span residues 194-201 (LHLVGVNV), 307-316 (LEVDLGYLII), and 451-460 (LLPSLEFISL). Residues 487–526 (ALVSNQNSNNDDNNAQNNNANIHDNNHHHPDDSDEENDFR) are disordered. The span at 491-509 (NQNSNNDDNNAQNNNANIH) shows a compositional bias: low complexity. Thr591 is modified (phosphothreonine). Phosphoserine is present on residues Ser598, Ser600, and Ser606. 3 disordered regions span residues 620–666 (RRYS…FPLE), 685–766 (MKAA…MEEG), and 787–909 (RTSR…STSD). Basic and acidic residues-rich tracts occupy residues 621–630 (RYSEREEKTG) and 685–699 (MKAA…KNKD). Residues 703-740 (SCSSTTASTVGNSSSHNTASQSPDFVRTVNSGGSSEPS) show a composition bias toward polar residues. Residues Ser736 and Ser740 each carry the phosphoserine modification. The segment covering 787 to 798 (RTSRCSDEERPS) has biased composition (basic and acidic residues). Over residues 849 to 861 (SSQPESCDVQSNE) the composition is skewed to polar residues. Residues 889–900 (TKPRHAMKRKRT) are compositionally biased toward basic residues. Residues 896–899 (KRKR) carry the Nuclear localization signal motif.

Part of the SCF (SKP1-CUL1-F-box) E3 ubiquitin-protein ligase complex SCF(FBXO38) composed of CUL1, SKP1, RBX1 and FBXO38. Interacts with KLF7. Interacts with PDCD1/PD-1.

Its subcellular location is the cytoplasm. It localises to the cytosol. The protein resides in the nucleus. The protein operates within protein modification; protein ubiquitination. In terms of biological role, substrate recognition component of a SCF (SKP1-CUL1-F-box protein) E3 ubiquitin-protein ligase complex which mediates the ubiquitination and subsequent proteasomal degradation of PDCD1/PD-1, thereby regulating T-cells-mediated immunity. Required for anti-tumor activity of T-cells by promoting the degradation of PDCD1/PD-1; the PDCD1-mediated inhibitory pathway being exploited by tumors to attenuate anti-tumor immunity and facilitate tumor survival. May indirectly stimulate the activity of transcription factor KLF7, a regulator of neuronal differentiation, without promoting KLF7 ubiquitination. This is F-box only protein 38 from Homo sapiens (Human).